The chain runs to 1196 residues: DNA-directed RNA polymerase subunit 2 (1196 aa).

The interval 1074-1095 (SRARGPTQLLTRQAPEGRSRDG) is disordered. The C4-type zinc finger occupies 1133–1154 (CDSCGQFAHKVPEKKYYTCTGC).

The protein belongs to the RNA polymerase beta chain family.

The protein resides in the virion. It carries out the reaction RNA(n) + a ribonucleoside 5'-triphosphate = RNA(n+1) + diphosphate. Its function is as follows. DNA-dependent RNA polymerase catalyzes the transcription of DNA into RNA using the four ribonucleoside triphosphates as substrates. The sequence is that of DNA-directed RNA polymerase subunit 2 (RPO2) from Acanthamoeba polyphaga mimivirus (APMV).